A 159-amino-acid polypeptide reads, in one-letter code: Phosphopantetheine adenylyltransferase (159 aa).

Threonine 10 lines the substrate pocket. ATP-binding positions include 10–11 and histidine 18; that span reads TF. Substrate is bound by residues lysine 42, methionine 74, and arginine 88. ATP contacts are provided by residues 89 to 91, glutamate 99, and 124 to 130; these read GLR and WSFISSS.

The protein belongs to the bacterial CoaD family. In terms of assembly, homohexamer. It depends on Mg(2+) as a cofactor.

The protein resides in the cytoplasm. It carries out the reaction (R)-4'-phosphopantetheine + ATP + H(+) = 3'-dephospho-CoA + diphosphate. Its pathway is cofactor biosynthesis; coenzyme A biosynthesis; CoA from (R)-pantothenate: step 4/5. Reversibly transfers an adenylyl group from ATP to 4'-phosphopantetheine, yielding dephospho-CoA (dPCoA) and pyrophosphate. This is Phosphopantetheine adenylyltransferase from Yersinia pseudotuberculosis serotype I (strain IP32953).